The chain runs to 407 residues: Phosphopentomutase (407 aa).

D10, D306, H311, D347, H348, and H359 together coordinate Mn(2+).

Belongs to the phosphopentomutase family. Requires Mn(2+) as cofactor.

It is found in the cytoplasm. It carries out the reaction 2-deoxy-alpha-D-ribose 1-phosphate = 2-deoxy-D-ribose 5-phosphate. The enzyme catalyses alpha-D-ribose 1-phosphate = D-ribose 5-phosphate. It functions in the pathway carbohydrate degradation; 2-deoxy-D-ribose 1-phosphate degradation; D-glyceraldehyde 3-phosphate and acetaldehyde from 2-deoxy-alpha-D-ribose 1-phosphate: step 1/2. Its function is as follows. Isomerase that catalyzes the conversion of deoxy-ribose 1-phosphate (dRib-1-P) and ribose 1-phosphate (Rib-1-P) to deoxy-ribose 5-phosphate (dRib-5-P) and ribose 5-phosphate (Rib-5-P), respectively. The protein is Phosphopentomutase of Pectobacterium carotovorum subsp. carotovorum (strain PC1).